We begin with the raw amino-acid sequence, 703 residues long: Polyribonucleotide nucleotidyltransferase (703 aa).

Positions 488 and 494 each coordinate Mg(2+). In terms of domain architecture, KH spans 555-614 (PKIVKMQINPDKIKDVIGPGGKIITKIIDETGVKIDIEQTGEVFISGIEIDMIKKAQELI). An S1 motif domain is found at 624–692 (GKTYKGKVSR…EKGRVNLSRK (69 aa)).

It belongs to the polyribonucleotide nucleotidyltransferase family. Requires Mg(2+) as cofactor.

The protein localises to the cytoplasm. The catalysed reaction is RNA(n+1) + phosphate = RNA(n) + a ribonucleoside 5'-diphosphate. Its function is as follows. Involved in mRNA degradation. Catalyzes the phosphorolysis of single-stranded polyribonucleotides processively in the 3'- to 5'-direction. This is Polyribonucleotide nucleotidyltransferase from Clostridioides difficile (strain 630) (Peptoclostridium difficile).